Reading from the N-terminus, the 504-residue chain is MFMKSKAAGSEFDGAVAKDNVNTRLKIAQFMSADPNATADVPQLKLETPTAFKANGEVDTWGPLGSGTAFNDVVNVRAYSVKNSDQPRVMRYFLFSLVNIDKDGTWSDVRPAAGLYEQDPGYVTPGVDPNNKGQGQDSGLVSLDATGLEGDVYLQVVGLDFNYNRVAYLVPLKLNRTKAASEVVAPTNVRAIAYTLSTRIDYLYKTQDPVLDAPTSGTNLWVTTSWDAPVTLSGYRGFRVLRSTKAEGPYSQVAFAGEAQCAKPADAKATTRRCTVSDNTASLITDQDYFYKVVAAGTNEATSDVAPTHTLPIFQPKLLSPGKDVHDVDLTPNYTVKLNLFQTGATGAVMNLRVADFITGESYAYAAKRLTVRKELGETQILSNLQGTSNYYVFRDSYATDNDPKTNNDTVTYDAASDVLTVPHQFEVDYLGGNKVPLQANRRYSWYIDSGYAYRLADPSKPTTAANNYIAAYSVYSDPSDTVRVVPGGVKQGGAEVNDFTTRQ.

Positions 1 to 212 (MFMKSKAAGS…LYKTQDPVLD (212 aa)) are excised as a propeptide.

This is an uncharacterized protein from Deinococcus radiodurans (strain ATCC 13939 / DSM 20539 / JCM 16871 / CCUG 27074 / LMG 4051 / NBRC 15346 / NCIMB 9279 / VKM B-1422 / R1).